The chain runs to 653 residues: Mannosyl-oligosaccharide 1,2-alpha-mannosidase IA (653 aa).

The Cytoplasmic segment spans residues 1–41 (MPVGGLLPLFSSPAGGVLGGGLGGGGGRKGSGPAALRLTEK). Residues 42–62 (FVLLLVFSAFITLCFGAIFFL) traverse the membrane as a helical; Signal-anchor for type II membrane protein segment. Topologically, residues 63 to 653 (PDSSKLLSGV…DKKEVEIREE (591 aa)) are lumenal. Residues 81–116 (QPAADHKPGPGARAEDAAEGRARRREEGAPGDPEAA) are disordered. A compositionally biased stretch (basic and acidic residues) spans 84-108 (ADHKPGPGARAEDAAEGRARRREEG). The cysteines at positions 476 and 508 are disulfide-linked. Asn-513 is a glycosylation site (N-linked (GlcNAc...) asparagine). The Proton donor role is filled by Glu-522.

It belongs to the glycosyl hydrolase 47 family. It depends on Ca(2+) as a cofactor.

The protein localises to the golgi apparatus membrane. The enzyme catalyses N(4)-(alpha-D-Man-(1-&gt;2)-alpha-D-Man-(1-&gt;2)-alpha-D-Man-(1-&gt;3)-[alpha-D-Man-(1-&gt;2)-alpha-D-Man-(1-&gt;3)-[alpha-D-Man-(1-&gt;2)-alpha-D-Man-(1-&gt;6)]-alpha-D-Man-(1-&gt;6)]-beta-D-Man-(1-&gt;4)-beta-D-GlcNAc-(1-&gt;4)-beta-D-GlcNAc)-L-asparaginyl-[protein] (N-glucan mannose isomer 9A1,2,3B1,2,3) + 4 H2O = N(4)-(alpha-D-Man-(1-&gt;3)-[alpha-D-Man-(1-&gt;3)-[alpha-D-Man-(1-&gt;6)]-alpha-D-Man-(1-&gt;6)]-beta-D-Man-(1-&gt;4)-beta-D-GlcNAc-(1-&gt;4)-beta-D-GlcNAc)-L-asparaginyl-[protein] (N-glucan mannose isomer 5A1,2) + 4 beta-D-mannose. It carries out the reaction N(4)-(alpha-D-Man-(1-&gt;2)-alpha-D-Man-(1-&gt;2)-alpha-D-Man-(1-&gt;3)-[alpha-D-Man-(1-&gt;3)-[alpha-D-Man-(1-&gt;2)-alpha-D-Man-(1-&gt;6)]-alpha-D-Man-(1-&gt;6)]-beta-D-Man-(1-&gt;4)-beta-D-GlcNAc-(1-&gt;4)-beta-D-GlcNAc)-L-asparaginyl-[protein] (N-glucan mannose isomer 8A1,2,3B1,3) + 3 H2O = N(4)-(alpha-D-Man-(1-&gt;3)-[alpha-D-Man-(1-&gt;3)-[alpha-D-Man-(1-&gt;6)]-alpha-D-Man-(1-&gt;6)]-beta-D-Man-(1-&gt;4)-beta-D-GlcNAc-(1-&gt;4)-beta-D-GlcNAc)-L-asparaginyl-[protein] (N-glucan mannose isomer 5A1,2) + 3 beta-D-mannose. The protein operates within protein modification; protein glycosylation. With respect to regulation, inhibited by both 1-deoxymannojirimycin and kifunensine. Involved in the maturation of Asn-linked oligosaccharides. Progressively trim alpha-1,2-linked mannose residues from Man(9)GlcNAc(2) to produce Man(5)GlcNAc(2). The polypeptide is Mannosyl-oligosaccharide 1,2-alpha-mannosidase IA (MAN1A1) (Homo sapiens (Human)).